A 1374-amino-acid polypeptide reads, in one-letter code: F-actin-uncapping protein LRRC16A (1374 aa).

Methionine 1 carries the N-acetylmethionine modification. The residue at position 122 (serine 122) is a Phosphoserine. LRR repeat units follow at residues 245 to 269 (SNRL…LAGA), 275 to 298 (NSGL…SLSI), 304 to 327 (PKGL…SLCQ), 336 to 363 (ASTL…FLAQ), 391 to 418 (LQCL…SFKQ), 423 to 447 (SLAL…LLLG), 485 to 510 (IHNI…VWLS), 547 to 570 (DSPL…IINA), 574 to 597 (NTSL…MLAK), and 658 to 682 (LQKI…AYRL). A coiled-coil region spans residues 714 to 738 (GDAIQEDLKAAERLMRDAKNSKTLL). The residue at position 920 (threonine 920) is a Phosphothreonine. Disordered regions lie at residues 961-982 (PFPS…PSEE) and 1040-1374 (KMDC…FIFV). The LRR 11 repeat unit spans residues 962–985 (FPSVRQEKRSSGLISELPSEEGRR). Residues 962–1084 (FPSVRQEKRS…LIKSRSRSER (123 aa)) are inhibits capping activity of CP. Phosphoserine is present on serine 972. Basic and acidic residues predominate over residues 1040-1064 (KMDCKRSSSRSSDAHELGEGDEKKK). Residues 1058-1092 (EGDEKKKRDSRRSGFLNLIKSRSRSERPPTVLMTE) are necessary for localization at the cell membrane. Phosphoserine is present on serine 1096. Composition is skewed to basic and acidic residues over residues 1108–1132 (TTRK…KTPE) and 1141–1150 (EAGRAERSDS). The span at 1191–1204 (VISQDPSSPVSCNT) shows a compositional bias: polar residues. Threonine 1229 carries the phosphothreonine modification. Residues 1232–1244 (KNAKAEPRVDGGC) are compositionally biased toward basic and acidic residues. Residues 1245–1263 (RSRSSSSMPTSPKPLLQSP) are compositionally biased toward low complexity. Residues serine 1281, serine 1289, serine 1291, serine 1295, serine 1319, serine 1328, and serine 1335 each carry the phosphoserine modification. Residues 1317–1330 (QNSSQSSPRSFSQE) show a composition bias toward low complexity. The segment covering 1343 to 1356 (QEQKQRSSGKDGHQ) has biased composition (basic and acidic residues). Serine 1363 carries the phosphoserine modification.

The protein belongs to the CARMIL family. As to quaternary structure, homodimer. Interacts (via C-terminus) with heterodimeric capping protein (CP); this interaction uncaps barbed ends capped by CP, enhances barbed-end actin polymerization and promotes lamellipodial formation and cell migration. Interacts with MYO1E. Interacts with TRIO.

It localises to the cytoplasm. Its subcellular location is the cytoskeleton. The protein resides in the cell membrane. The protein localises to the cell projection. It is found in the lamellipodium. In terms of biological role, cell membrane-cytoskeleton-associated protein that plays a role in the regulation of actin polymerization at the barbed end of actin filaments. Prevents F-actin heterodimeric capping protein (CP) activity at the leading edges of migrating cells, and hence generates uncapped barbed ends and enhances actin polymerization, however, seems unable to nucleate filaments. Plays a role in lamellipodial protrusion formations and cell migration. This is F-actin-uncapping protein LRRC16A from Mus musculus (Mouse).